Consider the following 217-residue polypeptide: ATP-dependent Clp protease proteolytic subunit (217 aa).

The active-site Nucleophile is Ser119. His144 is an active-site residue.

The protein belongs to the peptidase S14 family. In terms of assembly, fourteen ClpP subunits assemble into 2 heptameric rings which stack back to back to give a disk-like structure with a central cavity, resembling the structure of eukaryotic proteasomes.

Its subcellular location is the cytoplasm. The catalysed reaction is Hydrolysis of proteins to small peptides in the presence of ATP and magnesium. alpha-casein is the usual test substrate. In the absence of ATP, only oligopeptides shorter than five residues are hydrolyzed (such as succinyl-Leu-Tyr-|-NHMec, and Leu-Tyr-Leu-|-Tyr-Trp, in which cleavage of the -Tyr-|-Leu- and -Tyr-|-Trp bonds also occurs).. Cleaves peptides in various proteins in a process that requires ATP hydrolysis. Has a chymotrypsin-like activity. Plays a major role in the degradation of misfolded proteins. This chain is ATP-dependent Clp protease proteolytic subunit, found in Bordetella petrii (strain ATCC BAA-461 / DSM 12804 / CCUG 43448).